A 160-amino-acid chain; its full sequence is S-ribosylhomocysteine lyase (160 aa).

The Fe cation site is built by histidine 57, histidine 61, and cysteine 127.

It belongs to the LuxS family. As to quaternary structure, homodimer. It depends on Fe cation as a cofactor.

It catalyses the reaction S-(5-deoxy-D-ribos-5-yl)-L-homocysteine = (S)-4,5-dihydroxypentane-2,3-dione + L-homocysteine. In terms of biological role, involved in the synthesis of autoinducer 2 (AI-2) which is secreted by bacteria and is used to communicate both the cell density and the metabolic potential of the environment. The regulation of gene expression in response to changes in cell density is called quorum sensing. Catalyzes the transformation of S-ribosylhomocysteine (RHC) to homocysteine (HC) and 4,5-dihydroxy-2,3-pentadione (DPD). The sequence is that of S-ribosylhomocysteine lyase from Streptococcus agalactiae serotype V (strain ATCC BAA-611 / 2603 V/R).